The chain runs to 154 residues: 3-hydroxyacyl-[acyl-carrier-protein] dehydratase FabZ (154 aa).

His-60 is an active-site residue.

This sequence belongs to the thioester dehydratase family. FabZ subfamily.

The protein resides in the cytoplasm. The catalysed reaction is a (3R)-hydroxyacyl-[ACP] = a (2E)-enoyl-[ACP] + H2O. Involved in unsaturated fatty acids biosynthesis. Catalyzes the dehydration of short chain beta-hydroxyacyl-ACPs and long chain saturated and unsaturated beta-hydroxyacyl-ACPs. The polypeptide is 3-hydroxyacyl-[acyl-carrier-protein] dehydratase FabZ (Haemophilus ducreyi (strain 35000HP / ATCC 700724)).